A 342-amino-acid polypeptide reads, in one-letter code: Dihydroorotase (342 aa).

Zn(2+) contacts are provided by His-13 and His-15. Residues 15-17 (HLR) and Asn-41 each bind substrate. 3 residues coordinate Zn(2+): Lys-98, His-135, and His-173. Lys-98 is subject to N6-carboxylysine. A substrate-binding site is contributed by His-135. Leu-218 is a binding site for substrate. Position 246 (Asp-246) interacts with Zn(2+). Asp-246 is a catalytic residue. Substrate contacts are provided by His-250 and Ala-262.

The protein belongs to the metallo-dependent hydrolases superfamily. DHOase family. Class II DHOase subfamily. In terms of assembly, homodimer. Requires Zn(2+) as cofactor.

It carries out the reaction (S)-dihydroorotate + H2O = N-carbamoyl-L-aspartate + H(+). Its pathway is pyrimidine metabolism; UMP biosynthesis via de novo pathway; (S)-dihydroorotate from bicarbonate: step 3/3. In terms of biological role, catalyzes the reversible cyclization of carbamoyl aspartate to dihydroorotate. This Vibrio cholerae serotype O1 (strain ATCC 39315 / El Tor Inaba N16961) protein is Dihydroorotase.